The following is a 1041-amino-acid chain: Cullin-associated NEDD8-dissociated protein 1, C-terminal part (1041 aa).

2 disordered regions span residues 1 to 24 (MSSDAMSDYSHDDEHDPQTDELRE) and 64 to 103 (DMGEDEEMSGTQDDGSEDDVTEEPDLEDDDFEDFEEEGGY). Residues 9–24 (YSHDDEHDPQTDELRE) show a composition bias toward basic and acidic residues. Acidic residues predominate over residues 65–103 (MGEDEEMSGTQDDGSEDDVTEEPDLEDDDFEDFEEEGGY). An HEAT 1 repeat occupies 138–176 (SLYQQIAPAIVARFNKEREESVKLELVSTMDALVRKTAE). Positions 189-237 (SVGSGSKISRKRRRQDSDASMIDFEPSMGTSSAAGTPLAAPSSPQSGPQ) are disordered. Low complexity predominate over residues 225 to 237 (PLAAPSSPQSGPQ). HEAT repeat units lie at residues 242–279 (NALPVIVRSLVTMWKQASIHLKQAIIILLKSLALVRYG), 339–376 (PFLIALIPGVIVAVNDKNYKVSSEALAAVEQIVKALTP), 434–472 (LSFEKRSKGLVTLVDRLKNETTRLSAVRAIDDVAVLCSR), 479–516 (NWVREVTAELGAQLRKSDRVLRSASLETLRSLSMNPNT), 525–560 (MKNLEECLIPLISVEDVHLLAPSLIIIAKLVPGNAQ), 598–637 (GSGLTLMQNLLQDVGVNGDTSVVGRSIGTLLVHGGSNVGV), 670–708 (GASCSLTPNVFIPHFNSKSEKVRLASATALGNAAAGNVK), 710–744 (YLPTILGGLEKSDPQSYLLLHSVKELLQHPEMVRR), 780–817 (LDPPAYIPQFQEYLANGDAGIRSIVVSAFRFTLSDSRD), and 822–867 (VLRP…HLGE).

The protein belongs to the CAND family. Interacts with candA-N. Interacts with unneddylated cullins culA and culD.

Its subcellular location is the nucleus. Its function is as follows. Assembly factor of SCF (SKP1-CUL1-F-box protein) E3 ubiquitin ligase complexes that promotes the exchange of the substrate-recognition F-box subunit in SCF complexes, thereby playing a key role in the cellular repertoire of SCF complexes. Acts as a F-box protein exchange factor when interacting with candA-N. This Emericella nidulans (strain FGSC A4 / ATCC 38163 / CBS 112.46 / NRRL 194 / M139) (Aspergillus nidulans) protein is Cullin-associated NEDD8-dissociated protein 1, C-terminal part (candA-C).